Reading from the N-terminus, the 201-residue chain is Lymphotoxin-alpha (201 aa).

A signal peptide spans 1–27 (MTSSGVLCLLGALSLQVLLLQPPGAQG). The segment at 23–52 (PGAQGAPNPDNSHSSSPAPPQTAQHLSQKS) is disordered. Over residues 31 to 51 (PDNSHSSSPAPPQTAQHLSQK) the composition is skewed to polar residues. One can recognise a THD domain in the interval 60-201 (PAAHLVGDPS…SSVFFGAFAL (142 aa)). Asparagine 93 is a glycosylation site (N-linked (GlcNAc...) asparagine). Cysteines 117 and 152 form a disulfide.

This sequence belongs to the tumor necrosis factor family. As to quaternary structure, homotrimer, and heterotrimer of either two LTB and one LTA subunits or (less prevalent) two LTA and one LTB subunits. Interacts with TNFRSF14.

Its subcellular location is the secreted. It localises to the membrane. In terms of biological role, cytokine that in its homotrimeric form binds to TNFRSF1A/TNFR1, TNFRSF1B/TNFBR and TNFRSF14/HVEM. In its heterotrimeric form with LTB binds to TNFRSF3/LTBR. Lymphotoxin is produced by lymphocytes and is cytotoxic for a wide range of tumor cells in vitro and in vivo. This Notamacropus eugenii (Tammar wallaby) protein is Lymphotoxin-alpha (LTA).